A 382-amino-acid polypeptide reads, in one-letter code: Putative UDP-sugar transporter DDB_G0278631 (382 aa).

The next 7 helical transmembrane spans lie at 117–137 (FSASNFLLFNQMVVTIVILHI), 183–203 (MYSALKRLVAVVILVMEYFIL), 211–231 (IIASVVVMVIGAVVAGITDLS), 234–254 (SLGYSLVLLSCIFQASYLIYV), 264–284 (YDMLYYNSVLSLPITIFLMIV), 302–322 (FQAYFILSIFLGFFLNFCIFF), and 354–374 (IIIHPINILGLIINIIGSIWY).

Belongs to the TPT transporter family. SLC35D subfamily.

It is found in the membrane. Functionally, may be nvolved in the import of UDP-sugars. This is Putative UDP-sugar transporter DDB_G0278631 from Dictyostelium discoideum (Social amoeba).